The following is a 139-amino-acid chain: Protein Turandot B (139 aa).

Positions 1-21 (MNFNMSMICFALLLIVTLCSA) are cleaved as a signal peptide.

This sequence belongs to the Turandot family.

The protein localises to the secreted. Functionally, a humoral factor that may play a role in stress tolerance. The polypeptide is Protein Turandot B (Drosophila yakuba (Fruit fly)).